Reading from the N-terminus, the 102-residue chain is Small ribosomal subunit protein uS10 (102 aa).

The protein belongs to the universal ribosomal protein uS10 family. Part of the 30S ribosomal subunit.

Functionally, involved in the binding of tRNA to the ribosomes. This chain is Small ribosomal subunit protein uS10, found in Brevibacillus brevis (strain 47 / JCM 6285 / NBRC 100599).